We begin with the raw amino-acid sequence, 269 residues long: Pyrroline-5-carboxylate reductase (269 aa).

It belongs to the pyrroline-5-carboxylate reductase family.

It is found in the cytoplasm. The enzyme catalyses L-proline + NADP(+) = (S)-1-pyrroline-5-carboxylate + NADPH + 2 H(+). The catalysed reaction is L-proline + NAD(+) = (S)-1-pyrroline-5-carboxylate + NADH + 2 H(+). It functions in the pathway amino-acid biosynthesis; L-proline biosynthesis; L-proline from L-glutamate 5-semialdehyde: step 1/1. Its activity is regulated as follows. Inhibited by p-chloromercuribenzoate. Functionally, catalyzes the reduction of 1-pyrroline-5-carboxylate (PCA) to L-proline. Does not catalyze the reverse reaction. The protein is Pyrroline-5-carboxylate reductase of Escherichia coli (strain K12).